Consider the following 165-residue polypeptide: uncharacterized protein (165 aa).

The RCK C-terminal domain maps to 76–161 (LEQVESALDD…LKRLIREKLT (86 aa)).

This is an uncharacterized protein from Bacillus subtilis (strain 168).